Consider the following 256-residue polypeptide: MSEEMDNVTAEEITDKHLQKDLDAEENQNVVKTMRGKVREKLKISKINKGEKSSMEQLVESKIYQRSKLSPQTEVSLDESLSFFILSGEEGSALGKSSEQRPVKDSYPKCFSLGVNLQNVAESEDEEFMKEFILTDLLKVKAADYEDDQEQIKKQKANIFVPSSSPVVNQHKLPKDMMPRILEDEGFYIQRKPEIYKKTCNKMENRLLKLEEGKCWFGESGEIMSLPTPIKQSWNFRLNVRKEPLNPLLKTIYRKL.

Residues 1–24 (MSEEMDNVTAEEITDKHLQKDLDA) are disordered. A compositionally biased stretch (basic and acidic residues) spans 13–22 (ITDKHLQKDL). Coiled coils occupy residues 136–159 (DLLKVKAADYEDDQEQIKKQKANI) and 194–214 (EIYKKTCNKMENRLLKLEEGK).

The chain is Protein CC2D2B homolog from Macaca fascicularis (Crab-eating macaque).